The following is a 309-amino-acid chain: Gamma-hemolysin component A (309 aa).

Positions 1–29 are cleaved as a signal peptide; it reads MIKNKILTATLAVGLIAPLANPFIEISKA.

Belongs to the aerolysin family. As to quaternary structure, toxicity requires sequential binding and synergistic association of a class S and a class F component which form heterooligomeric complexes. HlgA (class S) associates with HlgB (class F) thus forming an AB toxin in strains producing both gamma-hemolysins and leukocidins. HlgA and LukF-PV can also form a complex.

The protein resides in the secreted. Toxin that seems to act by forming pores in the membrane of the cell. Has a hemolytic and a leucotoxic activity. This Staphylococcus aureus (strain MRSA252) protein is Gamma-hemolysin component A (hlgA).